The sequence spans 236 residues: Small ribosomal subunit protein uS2c (236 aa).

This sequence belongs to the universal ribosomal protein uS2 family.

It is found in the plastid. Its subcellular location is the chloroplast. The polypeptide is Small ribosomal subunit protein uS2c (rps2) (Lactuca sativa (Garden lettuce)).